The chain runs to 255 residues: Ribonuclease PH (255 aa).

Residues Arg86 and 124 to 126 (GTR) contribute to the phosphate site.

This sequence belongs to the RNase PH family. In terms of assembly, homohexameric ring arranged as a trimer of dimers.

The enzyme catalyses tRNA(n+1) + phosphate = tRNA(n) + a ribonucleoside 5'-diphosphate. In terms of biological role, phosphorolytic 3'-5' exoribonuclease that plays an important role in tRNA 3'-end maturation. Removes nucleotide residues following the 3'-CCA terminus of tRNAs; can also add nucleotides to the ends of RNA molecules by using nucleoside diphosphates as substrates, but this may not be physiologically important. Probably plays a role in initiation of 16S rRNA degradation (leading to ribosome degradation) during starvation. In Geobacillus sp. (strain WCH70), this protein is Ribonuclease PH.